A 154-amino-acid polypeptide reads, in one-letter code: MKLHELKPAEGSRKNRKRVGRGPGGTDKTAGRGHKGQKSRSGAGKGSFFEGGRSSLISRLPKRGFNNVGTTYEVIQLGQLDVLEGDTFNREALELAGLVRRKNRPVKLLATGEVTRAVTVHVDAASAAAVKAVEAAGGKVILPNSQTEDAQKAE.

Residues 1 to 13 (MKLHELKPAEGSR) are compositionally biased toward basic and acidic residues. The segment at 1 to 52 (MKLHELKPAEGSRKNRKRVGRGPGGTDKTAGRGHKGQKSRSGAGKGSFFEGG) is disordered.

This sequence belongs to the universal ribosomal protein uL15 family. In terms of assembly, part of the 50S ribosomal subunit.

Functionally, binds to the 23S rRNA. This chain is Large ribosomal subunit protein uL15, found in Deinococcus deserti (strain DSM 17065 / CIP 109153 / LMG 22923 / VCD115).